A 437-amino-acid chain; its full sequence is UDP-N-acetylmuramoylalanine--D-glutamate ligase (437 aa).

112 to 118 is a binding site for ATP; that stretch reads GSNGKST.

Belongs to the MurCDEF family.

Its subcellular location is the cytoplasm. It carries out the reaction UDP-N-acetyl-alpha-D-muramoyl-L-alanine + D-glutamate + ATP = UDP-N-acetyl-alpha-D-muramoyl-L-alanyl-D-glutamate + ADP + phosphate + H(+). Its pathway is cell wall biogenesis; peptidoglycan biosynthesis. Its function is as follows. Cell wall formation. Catalyzes the addition of glutamate to the nucleotide precursor UDP-N-acetylmuramoyl-L-alanine (UMA). This is UDP-N-acetylmuramoylalanine--D-glutamate ligase (murD) from Haemophilus influenzae (strain ATCC 51907 / DSM 11121 / KW20 / Rd).